Here is a 471-residue protein sequence, read N- to C-terminus: Tryptophanase (471 aa).

N6-acetyllysine is present on residues Lys-5, Lys-115, and Lys-156. The residue at position 270 (Lys-270) is an N6-(pyridoxal phosphate)lysine. Residue Lys-450 is modified to N6-acetyllysine.

The protein belongs to the beta-eliminating lyase family. In terms of assembly, homotetramer. Pyridoxal 5'-phosphate is required as a cofactor.

The catalysed reaction is L-tryptophan + H2O = indole + pyruvate + NH4(+). Its pathway is amino-acid degradation; L-tryptophan degradation via pyruvate pathway; indole and pyruvate from L-tryptophan: step 1/1. The sequence is that of Tryptophanase from Escherichia coli O6:H1 (strain CFT073 / ATCC 700928 / UPEC).